A 341-amino-acid polypeptide reads, in one-letter code: Holliday junction branch migration complex subunit RuvB (341 aa).

The interval 4-185 (TDRLIVPTAV…FGIVARLEFY (182 aa)) is large ATPase domain (RuvB-L). ATP is bound by residues Leu-24, Arg-25, Gly-66, Lys-69, Thr-70, Thr-71, 132–134 (EDF), Arg-175, Tyr-185, and Arg-222. Residue Thr-70 coordinates Mg(2+). The small ATPAse domain (RuvB-S) stretch occupies residues 186–256 (SAEELGYIVH…VADAALVMLD (71 aa)). The segment at 259 to 341 (RAGLDVMDRK…ATPASDAELF (83 aa)) is head domain (RuvB-H). Residues Arg-295, Arg-314, and Arg-319 each coordinate DNA.

The protein belongs to the RuvB family. As to quaternary structure, homohexamer. Forms an RuvA(8)-RuvB(12)-Holliday junction (HJ) complex. HJ DNA is sandwiched between 2 RuvA tetramers; dsDNA enters through RuvA and exits via RuvB. An RuvB hexamer assembles on each DNA strand where it exits the tetramer. Each RuvB hexamer is contacted by two RuvA subunits (via domain III) on 2 adjacent RuvB subunits; this complex drives branch migration. In the full resolvosome a probable DNA-RuvA(4)-RuvB(12)-RuvC(2) complex forms which resolves the HJ.

It localises to the cytoplasm. The enzyme catalyses ATP + H2O = ADP + phosphate + H(+). Its function is as follows. The RuvA-RuvB-RuvC complex processes Holliday junction (HJ) DNA during genetic recombination and DNA repair, while the RuvA-RuvB complex plays an important role in the rescue of blocked DNA replication forks via replication fork reversal (RFR). RuvA specifically binds to HJ cruciform DNA, conferring on it an open structure. The RuvB hexamer acts as an ATP-dependent pump, pulling dsDNA into and through the RuvAB complex. RuvB forms 2 homohexamers on either side of HJ DNA bound by 1 or 2 RuvA tetramers; 4 subunits per hexamer contact DNA at a time. Coordinated motions by a converter formed by DNA-disengaged RuvB subunits stimulates ATP hydrolysis and nucleotide exchange. Immobilization of the converter enables RuvB to convert the ATP-contained energy into a lever motion, pulling 2 nucleotides of DNA out of the RuvA tetramer per ATP hydrolyzed, thus driving DNA branch migration. The RuvB motors rotate together with the DNA substrate, which together with the progressing nucleotide cycle form the mechanistic basis for DNA recombination by continuous HJ branch migration. Branch migration allows RuvC to scan DNA until it finds its consensus sequence, where it cleaves and resolves cruciform DNA. The chain is Holliday junction branch migration complex subunit RuvB from Thiobacillus denitrificans (strain ATCC 25259 / T1).